Consider the following 156-residue polypeptide: Small ribosomal subunit protein uS7 (156 aa).

Belongs to the universal ribosomal protein uS7 family. In terms of assembly, part of the 30S ribosomal subunit. Contacts proteins S9 and S11.

In terms of biological role, one of the primary rRNA binding proteins, it binds directly to 16S rRNA where it nucleates assembly of the head domain of the 30S subunit. Is located at the subunit interface close to the decoding center, probably blocks exit of the E-site tRNA. The polypeptide is Small ribosomal subunit protein uS7 (Carboxydothermus hydrogenoformans (strain ATCC BAA-161 / DSM 6008 / Z-2901)).